The chain runs to 116 residues: Large ribosomal subunit protein bL20c (116 aa).

Belongs to the bacterial ribosomal protein bL20 family.

Its subcellular location is the plastid. It localises to the chloroplast. In terms of biological role, binds directly to 23S ribosomal RNA and is necessary for the in vitro assembly process of the 50S ribosomal subunit. It is not involved in the protein synthesizing functions of that subunit. This is Large ribosomal subunit protein bL20c from Rhodomonas salina (Cryptomonas salina).